Reading from the N-terminus, the 208-residue chain is Uracil phosphoribosyltransferase (208 aa).

5-phospho-alpha-D-ribose 1-diphosphate-binding positions include Arg78, Arg103, and 130 to 138; that span reads DPMLATGGS. Uracil is bound by residues Ile193 and 198-200; that span reads GDA. Asp199 contributes to the 5-phospho-alpha-D-ribose 1-diphosphate binding site.

The protein belongs to the UPRTase family. Mg(2+) serves as cofactor.

The catalysed reaction is UMP + diphosphate = 5-phospho-alpha-D-ribose 1-diphosphate + uracil. The protein operates within pyrimidine metabolism; UMP biosynthesis via salvage pathway; UMP from uracil: step 1/1. With respect to regulation, allosterically activated by GTP. In terms of biological role, catalyzes the conversion of uracil and 5-phospho-alpha-D-ribose 1-diphosphate (PRPP) to UMP and diphosphate. This Shewanella amazonensis (strain ATCC BAA-1098 / SB2B) protein is Uracil phosphoribosyltransferase.